A 279-amino-acid polypeptide reads, in one-letter code: Acetylglutamate kinase (279 aa).

Substrate-binding positions include 62 to 63 (GG), Arg84, and Asn177.

This sequence belongs to the acetylglutamate kinase family. ArgB subfamily.

Its subcellular location is the cytoplasm. It catalyses the reaction N-acetyl-L-glutamate + ATP = N-acetyl-L-glutamyl 5-phosphate + ADP. It participates in amino-acid biosynthesis; L-arginine biosynthesis; N(2)-acetyl-L-ornithine from L-glutamate: step 2/4. Catalyzes the ATP-dependent phosphorylation of N-acetyl-L-glutamate. The sequence is that of Acetylglutamate kinase from Pseudothermotoga lettingae (strain ATCC BAA-301 / DSM 14385 / NBRC 107922 / TMO) (Thermotoga lettingae).